A 354-amino-acid chain; its full sequence is Protein C42 (354 aa).

A Nuclear localization signal motif is present at residues 349-352 (KRKK).

The protein belongs to the baculoviridae C42 protein family.

Its subcellular location is the host nucleus. The polypeptide is Protein C42 (Orgyia pseudotsugata (Douglas-fir tussock moth)).